The primary structure comprises 176 residues: MDLPGPIHDFLVVLLGSGLILGSMGVLLFNNSIYSAFSLGLVLVSISLFYILANAQFVAAAQLLIYVGAINVLIIFAVMFMKGSEYSKDFNLWTVGNGVTFLVCTSIFVSLMTTIVDTSWYGIIWTTRSNQILEQDLISNSQQIGIYLSTYFFLPFELISIILLAALIGAIAVARQ.

5 helical membrane passes run 10–30 (FLVVLLGSGLILGSMGVLLFN), 33–53 (IYSAFSLGLVLVSISLFYILA), 61–81 (AQLLIYVGAINVLIIFAVMFM), 92–112 (LWTVGNGVTFLVCTSIFVSLM), and 152–172 (FFLPFELISIILLAALIGAIA).

The protein belongs to the complex I subunit 6 family. In terms of assembly, NDH is composed of at least 16 different subunits, 5 of which are encoded in the nucleus.

The protein resides in the plastid. Its subcellular location is the chloroplast thylakoid membrane. It catalyses the reaction a plastoquinone + NADH + (n+1) H(+)(in) = a plastoquinol + NAD(+) + n H(+)(out). The catalysed reaction is a plastoquinone + NADPH + (n+1) H(+)(in) = a plastoquinol + NADP(+) + n H(+)(out). Its function is as follows. NDH shuttles electrons from NAD(P)H:plastoquinone, via FMN and iron-sulfur (Fe-S) centers, to quinones in the photosynthetic chain and possibly in a chloroplast respiratory chain. The immediate electron acceptor for the enzyme in this species is believed to be plastoquinone. Couples the redox reaction to proton translocation, and thus conserves the redox energy in a proton gradient. This chain is NAD(P)H-quinone oxidoreductase subunit 6, chloroplastic (ndhG), found in Cucumis sativus (Cucumber).